A 328-amino-acid chain; its full sequence is Cytochrome c biogenesis protein CcsA (328 aa).

8 helical membrane-spanning segments follow: residues 13–33 (ISFS…LVNL), 46–66 (GIII…IYSG), 73–93 (LYES…VSYF), 101–121 (LNTI…SGLL), 146–166 (MILG…LLVI), 234–254 (IISL…VWAN), 263–283 (WDPK…YLHI), and 295–315 (AIVA…VNLL).

This sequence belongs to the CcmF/CycK/Ccl1/NrfE/CcsA family. As to quaternary structure, may interact with Ccs1.

It is found in the plastid. The protein resides in the chloroplast thylakoid membrane. In terms of biological role, required during biogenesis of c-type cytochromes (cytochrome c6 and cytochrome f) at the step of heme attachment. This chain is Cytochrome c biogenesis protein CcsA, found in Arabidopsis thaliana (Mouse-ear cress).